The primary structure comprises 130 residues: uncharacterized protein (130 aa).

An N-terminal signal peptide occupies residues 1-26; the sequence is MKFIYKLLFILSIVLFLFNNIITING. Residue asparagine 88 is glycosylated (N-linked (GlcNAc...) asparagine).

It localises to the secreted. This is an uncharacterized protein from Dictyostelium discoideum (Social amoeba).